Consider the following 275-residue polypeptide: Homeobox-leucine zipper protein ATHB-17 (275 aa).

The segment at 95–143 (SSPLSDEGSGGGRDQLRLDMNRLPSSEDGDDEEFSHDDGSAPPRKKLRL) is disordered. A DNA-binding region (homeobox) is located at residues 136–195 (PPRKKLRLTREQSRLLEDSFRQNHTLNPKQKEVLAKHLMLRPRQIEVWFQNRRARSKLKQ). The tract at residues 203-224 (LKRWFGSLTEENHRLHREVEEL) is leucine-zipper. Positions 252–275 (AASPSRAVVPVPAKKTFPPQERDR) are disordered.

Belongs to the HD-ZIP homeobox family. Class II subfamily.

It is found in the nucleus. Probable transcription factor. This is Homeobox-leucine zipper protein ATHB-17 (ATHB-17) from Arabidopsis thaliana (Mouse-ear cress).